A 607-amino-acid chain; its full sequence is Monocarboxylate transporter 7 (607 aa).

The disordered stretch occupies residues 1 to 84 (MRASGQGPQR…PAETGCSRSR (84 aa)). The Cytoplasmic portion of the chain corresponds to 1–105 (MRASGQGPQR…ANVYTQVPDG (105 aa)). The chain crosses the membrane as a helical span at residues 106 to 126 (GWGWAVAVSFFFVEVFTYGII). At 127 to 146 (KSFGVFFNDLMDSFDESNSK) the chain is on the extracellular side. A helical membrane pass occupies residues 147 to 167 (ISWIISICVFVLTFTAPLSTV). Residues 168-175 (LSNRFGHR) are Cytoplasmic-facing. Residues 176–196 (LVVMAGGLLISLGMITASFSQ) traverse the membrane as a helical segment. Over 197 to 202 (RVYHMY) the chain is Extracellular. Residues 203–223 (ISIGVISGLGYCFSFLPTVTI) form a helical membrane-spanning segment. Topologically, residues 224 to 233 (LSQYFDKRRS) are cytoplasmic. The helical transmembrane segment at 234–254 (VVTAVASTGECFAVFAFAPAI) threads the bilayer. Residues 255-268 (TALKEHIGWRYSLL) lie on the Extracellular side of the membrane. A helical membrane pass occupies residues 269 to 289 (FVGLLQLNIMVCGALLRPIII). The Cytoplasmic portion of the chain corresponds to 290 to 383 (QGPGQSPKAV…KEKSFICYAL (94 aa)). 4 positions are modified to phosphoserine: serine 319, serine 322, serine 325, and serine 332. Residues 384–404 (FGLFATLGFFAPSLYIIPLGI) form a helical membrane-spanning segment. Topologically, residues 405–414 (SLGIDPDRAA) are extracellular. Residues 415-435 (FLLSTMAIAEVFGRIGAGFVL) traverse the membrane as a helical segment. Residues 436 to 442 (NREPIRK) are Cytoplasmic-facing. Residues 443 to 463 (IYIELICVILLTASLFAFTFA) traverse the membrane as a helical segment. At 464–465 (TE) the chain is on the extracellular side. A helical membrane pass occupies residues 466 to 486 (FWGLMLCSVFFGSMVGTIGGT). Over 487–507 (HIPMLAEDDVVGIEKMSSAAG) the chain is Cytoplasmic. A helical transmembrane segment spans residues 508-528 (VYVFIQSISGLAGPPLAGLLV). Residues 529 to 536 (DQSKIYSR) are Extracellular-facing. The chain crosses the membrane as a helical span at residues 537-557 (AFYSCAAGMCLAAVCLALVRP). At 558–607 (CKKGLCQNSHSGENQTDRQRGKALQDIPEDFLEMDLGKCEHRAHMKMDPV) the chain is on the cytoplasmic side.

This sequence belongs to the major facilitator superfamily. Monocarboxylate porter (TC 2.A.1.13) family. Forms functional complexes with BSG/CD147 or EMB/GP70 ancillary proteins.

The protein resides in the basolateral cell membrane. It catalyses the reaction taurine(out) = taurine(in). Functionally, monocarboxylate transporter selective for taurine. May associate with BSG/CD147 or EMB/GP70 ancillary proteins to mediate facilitative efflux or influx of taurine across the plasma membrane. The transport is pH- and sodium-independent. Rather low-affinity, is likely effective for taurine transport in tissues where taurine is present at high concentrations. In Mus musculus (Mouse), this protein is Monocarboxylate transporter 7.